The sequence spans 160 residues: MAKQKKHPQGTIALNKKALHDYFVEQKFEAGVALAGWEVKSLRAGKAQLVDSYVLLKDDEAWLMGAHITPLKTASTHVIADPIRTRKLLLHKRELDKLFGAVQQKGYTCVALSLYWKQHLVKCEIALAKGKKDFDKRHVEKERDANREVQRAMRSKGKDD.

The disordered stretch occupies residues 136-160 (KRHVEKERDANREVQRAMRSKGKDD).

The protein belongs to the SmpB family.

It is found in the cytoplasm. Functionally, required for rescue of stalled ribosomes mediated by trans-translation. Binds to transfer-messenger RNA (tmRNA), required for stable association of tmRNA with ribosomes. tmRNA and SmpB together mimic tRNA shape, replacing the anticodon stem-loop with SmpB. tmRNA is encoded by the ssrA gene; the 2 termini fold to resemble tRNA(Ala) and it encodes a 'tag peptide', a short internal open reading frame. During trans-translation Ala-aminoacylated tmRNA acts like a tRNA, entering the A-site of stalled ribosomes, displacing the stalled mRNA. The ribosome then switches to translate the ORF on the tmRNA; the nascent peptide is terminated with the 'tag peptide' encoded by the tmRNA and targeted for degradation. The ribosome is freed to recommence translation, which seems to be the essential function of trans-translation. The sequence is that of SsrA-binding protein from Ectopseudomonas mendocina (strain ymp) (Pseudomonas mendocina).